Reading from the N-terminus, the 436-residue chain is RNA polymerase sigma-54 factor (436 aa).

The segment at residues 324–343 (TLREVADCLSLHESTVSRAI) is a DNA-binding region (H-T-H motif). An RPON box motif is present at residues 413–421 (SRRTVAKYR).

This sequence belongs to the sigma-54 factor family. Interacts transiently with the RNAP core.

Sigma factors are initiation factors that promote the attachment of RNA polymerase (RNAP) to specific initiation sites and are then released. This sigma factor is responsible for the expression of the levanase operon. The open complex (sigma-54 and core RNA polymerase) serves as the receptor for receipt of the melting signal from the remotely bound activator protein LevR for the expression of the levanase operon. Associates with the RNAP core only in stationary phase cells. The polypeptide is RNA polymerase sigma-54 factor (sigL) (Bacillus subtilis (strain 168)).